The following is a 147-amino-acid chain: D-aminoacyl-tRNA deacylase (147 aa).

Residues 137–138 (GP) carry the Gly-cisPro motif, important for rejection of L-amino acids motif.

It belongs to the DTD family. In terms of assembly, homodimer.

The protein localises to the cytoplasm. It carries out the reaction glycyl-tRNA(Ala) + H2O = tRNA(Ala) + glycine + H(+). The catalysed reaction is a D-aminoacyl-tRNA + H2O = a tRNA + a D-alpha-amino acid + H(+). An aminoacyl-tRNA editing enzyme that deacylates mischarged D-aminoacyl-tRNAs. Also deacylates mischarged glycyl-tRNA(Ala), protecting cells against glycine mischarging by AlaRS. Acts via tRNA-based rather than protein-based catalysis; rejects L-amino acids rather than detecting D-amino acids in the active site. By recycling D-aminoacyl-tRNA to D-amino acids and free tRNA molecules, this enzyme counteracts the toxicity associated with the formation of D-aminoacyl-tRNA entities in vivo and helps enforce protein L-homochirality. This is D-aminoacyl-tRNA deacylase from Bacillus licheniformis (strain ATCC 14580 / DSM 13 / JCM 2505 / CCUG 7422 / NBRC 12200 / NCIMB 9375 / NCTC 10341 / NRRL NRS-1264 / Gibson 46).